The following is a 540-amino-acid chain: 2-succinyl-5-enolpyruvyl-6-hydroxy-3-cyclohexene-1-carboxylate synthase (540 aa).

It belongs to the TPP enzyme family. MenD subfamily. Homodimer. Mg(2+) is required as a cofactor. The cofactor is Mn(2+). It depends on thiamine diphosphate as a cofactor.

It catalyses the reaction isochorismate + 2-oxoglutarate + H(+) = 5-enolpyruvoyl-6-hydroxy-2-succinyl-cyclohex-3-ene-1-carboxylate + CO2. The protein operates within quinol/quinone metabolism; 1,4-dihydroxy-2-naphthoate biosynthesis; 1,4-dihydroxy-2-naphthoate from chorismate: step 2/7. It participates in quinol/quinone metabolism; menaquinone biosynthesis. Functionally, catalyzes the thiamine diphosphate-dependent decarboxylation of 2-oxoglutarate and the subsequent addition of the resulting succinic semialdehyde-thiamine pyrophosphate anion to isochorismate to yield 2-succinyl-5-enolpyruvyl-6-hydroxy-3-cyclohexene-1-carboxylate (SEPHCHC). This chain is 2-succinyl-5-enolpyruvyl-6-hydroxy-3-cyclohexene-1-carboxylate synthase, found in Mycobacteroides abscessus (strain ATCC 19977 / DSM 44196 / CCUG 20993 / CIP 104536 / JCM 13569 / NCTC 13031 / TMC 1543 / L948) (Mycobacterium abscessus).